We begin with the raw amino-acid sequence, 1050 residues long: Sucrose-phosphate synthase 4 (1050 aa).

Positions 134–167 (QGRNDAEEDLLSELSEGEKDKNDGEKEKSEVVTT) are disordered. Residue Ser-148 is modified to Phosphoserine. Over residues 149–163 (EGEKDKNDGEKEKSE) the composition is skewed to basic and acidic residues. Ser-180 is subject to Phosphoserine.

This sequence belongs to the glycosyltransferase 1 family. As to quaternary structure, homodimer or homotetramer.

The enzyme catalyses beta-D-fructose 6-phosphate + UDP-alpha-D-glucose = sucrose 6(F)-phosphate + UDP + H(+). It functions in the pathway glycan biosynthesis; sucrose biosynthesis; sucrose from D-fructose 6-phosphate and UDP-alpha-D-glucose: step 1/2. Its activity is regulated as follows. Activity is regulated by phosphorylation and moderated by concentration of metabolites and light. Its function is as follows. Plays a role in photosynthetic sucrose synthesis by catalyzing the rate-limiting step of sucrose biosynthesis from UDP-glucose and fructose- 6-phosphate. Involved in the regulation of carbon partitioning in the leaves of plants. May regulate the synthesis of sucrose and therefore play a major role as a limiting factor in the export of photoassimilates out of the leaf. Plays a role for sucrose availability that is essential for plant growth and fiber elongation. The chain is Sucrose-phosphate synthase 4 from Arabidopsis thaliana (Mouse-ear cress).